A 571-amino-acid polypeptide reads, in one-letter code: RUN and FYVE domain-containing protein 4 (571 aa).

The RUN domain occupies 33-166; sequence TDTSAELHRL…VAFELDLQQP (134 aa). Positions 174 to 207 are disordered; the sequence is MFSESRCSSSTQTQGRRPRKNKDAPKKIPAAYGG. Residues 178–188 are compositionally biased toward polar residues; the sequence is SRCSSSTQTQG. Residues 408–481 are a coiled coil; that stretch reads EVSLQDEIKS…ERRDAMYQEE (74 aa). Residues 474 to 567 form an FYVE-type zinc finger; that stretch reads RDAMYQEELG…CCPPCAQGRE (94 aa). Zn(2+) contacts are provided by C521, C524, C537, C540, C545, C548, C559, and C562.

In terms of assembly, forms homodimers (via coiled coil domain). Interacts with RAB7A. Forms a ternary complex with RAB7A and LAMP2; the interaction with RAB7A is mediated by RUFY4 (via RUN and coiled coil domains). Interacts with GTP-, but not GDP-bound ARL8A and ARL8B. Interacts with dynactin/DCTN1 and the dynein intermediate chain DYNC1I1/2.

The protein resides in the cytoplasmic vesicle. Its subcellular location is the autophagosome. It localises to the lysosome. In terms of biological role, ARL8 effector that promotes the coupling of endolysosomes to dynein-dynactin for retrograde transport along microtubules. Acts by binding both GTP-bound ARL8 and dynein-dynactin. In nonneuronal cells, promotes concentration of endolysosomes in the juxtanuclear area. In hippocampal neurons, drives retrograde transport of endolysosomes from the axon to the soma. Positive regulator of macroautophagy in dendritic cells. Increases autophagic flux, probably by stimulating both autophagosome formation and facilitating tethering with lysosomes. Binds to phosphatidylinositol 3-phosphate (PtdIns3P) through its FYVE-type zinc finger. Positive regulator of osteosclast bone-resorbing activity, possibly by promoting late endosome-lysosome fusion by acting as an adapter protein between RAB7A on late endosomes and LAMP2 on primary lysosomes. The polypeptide is RUN and FYVE domain-containing protein 4 (RUFY4) (Homo sapiens (Human)).